Reading from the N-terminus, the 347-residue chain is D-alanine--D-alanine ligase (347 aa).

The ATP-grasp domain occupies 134–332; the sequence is KLYAKDLGVK…LAQSLPKTPK (199 aa). Position 161-216 (161-216) interacts with ATP; the sequence is LIKFNFPFIVKPSNAGSSLGVNVVKEEKELVYALDSAFEYSKEVLIEPFIQGVKEY. Mg(2+)-binding residues include Asp-288, Glu-300, and Asn-302.

It belongs to the D-alanine--D-alanine ligase family. Mg(2+) is required as a cofactor. The cofactor is Mn(2+).

Its subcellular location is the cytoplasm. It carries out the reaction 2 D-alanine + ATP = D-alanyl-D-alanine + ADP + phosphate + H(+). It functions in the pathway cell wall biogenesis; peptidoglycan biosynthesis. Its function is as follows. Cell wall formation. This Helicobacter pylori (strain P12) protein is D-alanine--D-alanine ligase.